The primary structure comprises 215 residues: Urease accessory protein UreG (215 aa).

24 to 31 (GPVGSGKT) lines the GTP pocket.

This sequence belongs to the SIMIBI class G3E GTPase family. UreG subfamily. In terms of assembly, homodimer. UreD, UreF and UreG form a complex that acts as a GTP-hydrolysis-dependent molecular chaperone, activating the urease apoprotein by helping to assemble the nickel containing metallocenter of UreC. The UreE protein probably delivers the nickel.

The protein localises to the cytoplasm. Its function is as follows. Facilitates the functional incorporation of the urease nickel metallocenter. This process requires GTP hydrolysis, probably effectuated by UreG. The polypeptide is Urease accessory protein UreG (Burkholderia cenocepacia (strain HI2424)).